Consider the following 402-residue polypeptide: ORC1-type DNA replication protein 17 (402 aa).

The ATP site is built by Tyr-223 and Arg-235.

The protein belongs to the CDC6/cdc18 family.

In terms of biological role, involved in regulation of DNA replication. This Haloarcula marismortui (strain ATCC 43049 / DSM 3752 / JCM 8966 / VKM B-1809) (Halobacterium marismortui) protein is ORC1-type DNA replication protein 17 (cdc6q).